Reading from the N-terminus, the 391-residue chain is GTPase Obg (391 aa).

The Obg domain maps to 1–159 (MKFIDEALIR…RDLLLELMLL (159 aa)). One can recognise an OBG-type G domain in the interval 160 to 333 (ADVGMLGLPN…LTRDIMDFIE (174 aa)). GTP contacts are provided by residues 166 to 173 (GLPNAGKS), 191 to 195 (FTTLV), 213 to 216 (DIPG), 283 to 286 (NKID), and 314 to 316 (SAA). Residues Ser173 and Thr193 each coordinate Mg(2+).

This sequence belongs to the TRAFAC class OBG-HflX-like GTPase superfamily. OBG GTPase family. Monomer. The cofactor is Mg(2+).

It is found in the cytoplasm. Functionally, an essential GTPase which binds GTP, GDP and possibly (p)ppGpp with moderate affinity, with high nucleotide exchange rates and a fairly low GTP hydrolysis rate. Plays a role in control of the cell cycle, stress response, ribosome biogenesis and in those bacteria that undergo differentiation, in morphogenesis control. The sequence is that of GTPase Obg from Actinobacillus pleuropneumoniae serotype 5b (strain L20).